A 181-amino-acid chain; its full sequence is MIAKGVSLRYSKALVDIATNPEQIKSHLLALEEFVGILETIPKLKELLFDPHLSTLTKKSILQRLFKDRLDETILNFLFVLIEKNRFKYIVDIRKEYHRLAKKRLGILEVRLLTAVSVSDIPQEKVRIKLQKTYQKEVEIQNVVNPDIVGGMILIMDHQIFDNSVKKRLAKLKVSLLTAKV.

This sequence belongs to the ATPase delta chain family. As to quaternary structure, F-type ATPases have 2 components, F(1) - the catalytic core - and F(0) - the membrane proton channel. F(1) has five subunits: alpha(3), beta(3), gamma(1), delta(1), epsilon(1). F(0) has three main subunits: a(1), b(2) and c(10-14). The alpha and beta chains form an alternating ring which encloses part of the gamma chain. F(1) is attached to F(0) by a central stalk formed by the gamma and epsilon chains, while a peripheral stalk is formed by the delta and b chains.

It localises to the cell inner membrane. Its function is as follows. F(1)F(0) ATP synthase produces ATP from ADP in the presence of a proton or sodium gradient. F-type ATPases consist of two structural domains, F(1) containing the extramembraneous catalytic core and F(0) containing the membrane proton channel, linked together by a central stalk and a peripheral stalk. During catalysis, ATP synthesis in the catalytic domain of F(1) is coupled via a rotary mechanism of the central stalk subunits to proton translocation. This protein is part of the stalk that links CF(0) to CF(1). It either transmits conformational changes from CF(0) to CF(1) or is implicated in proton conduction. The chain is ATP synthase subunit delta from Protochlamydia amoebophila (strain UWE25).